The sequence spans 98 residues: Small ribosomal subunit protein eS24 (98 aa).

Residues G76–A98 form a disordered region. The segment covering G89 to A98 has biased composition (basic and acidic residues).

The protein belongs to the eukaryotic ribosomal protein eS24 family.

The sequence is that of Small ribosomal subunit protein eS24 from Methanosphaerula palustris (strain ATCC BAA-1556 / DSM 19958 / E1-9c).